A 486-amino-acid chain; its full sequence is Monocarboxylate transporter 12 (486 aa).

Residues 1–9 (MTKITRVGS) lie on the Cytoplasmic side of the membrane. Helical transmembrane passes span 10-30 (ASPPDGGWGWMIVAGCFLVTI), 58-78 (AWIHSIVDCMTMLCAPLGSVV), 86-106 (AGIMLGGLLASTGLILGSFAT), 115-135 (LGVLTGLGFALCYSPAIAMVG), 148-168 (IAMSGSGIGTFILAPVVQLLI), and 177-197 (LLILGGFVLNLCVCGALMRPI). Positions 201 to 220 (EDPSGPEKSHDRDAQREDCK) are enriched in basic and acidic residues. Positions 201–221 (EDPSGPEKSHDRDAQREDCKQ) are disordered. 6 helical membrane-spanning segments follow: residues 253-273 (FVVLAVSVLFMAYGCSPLFVY), 289-309 (AFLMSILGVIDIVGNITFGWL), 320-340 (YVCYLFAVALDGLCYLCLPML), 353-373 (FGYFDGAYVTLIPVVTAEIVG), 383-403 (VVYFLHAVPYLVSPPIAGWLV), and 410-430 (TAAFLLCGFAMIFSSILLGFA). Residues 431–486 (KIAKRMKRTQVPFLVKDSDPKLHLWTNGSVAYSIAKELDQKDEESLAKARTGCNLT) lie on the Cytoplasmic side of the membrane.

This sequence belongs to the major facilitator superfamily. Monocarboxylate porter (TC 2.A.1.13) family. As to quaternary structure, interacts with isoform 2 of BSG; this interaction is required for its localization to the plasma membrane. As to expression, detected in kidney, choroid plexus, testis, lung, stomach, large and small intestine, spleen, fat and parotid gland. In eye, expressed in cornea, ciliary epithelium, lens epithelium and lens fiber.

The protein localises to the cell membrane. It is found in the basolateral cell membrane. It catalyses the reaction creatine(in) = creatine(out). The enzyme catalyses guanidinoacetate(in) = guanidinoacetate(out). With respect to regulation, creatine uptake is inhibited by carbonyl cyanide 3-chlorophenylhydrazone (CCCP) and by valinomycin. Functionally, functions as a transporter for creatine and as well for its precursor guanidinoacetate. Transport of creatine and GAA is independent of resting membrane potential and extracellular Na(+), Cl(-), or pH. Contributes to the process of creatine biosynthesis and distribution. This is Monocarboxylate transporter 12 from Rattus norvegicus (Rat).